The sequence spans 367 residues: tRNA/tmRNA (uracil-C(5))-methyltransferase (367 aa).

Residues Gln190, Tyr218, Asn223, Glu239, and Asp299 each contribute to the S-adenosyl-L-methionine site. Cys324 (nucleophile) is an active-site residue. Glu358 (proton acceptor) is an active-site residue.

The protein belongs to the class I-like SAM-binding methyltransferase superfamily. RNA M5U methyltransferase family. TrmA subfamily.

It catalyses the reaction uridine(54) in tRNA + S-adenosyl-L-methionine = 5-methyluridine(54) in tRNA + S-adenosyl-L-homocysteine + H(+). It carries out the reaction uridine(341) in tmRNA + S-adenosyl-L-methionine = 5-methyluridine(341) in tmRNA + S-adenosyl-L-homocysteine + H(+). In terms of biological role, dual-specificity methyltransferase that catalyzes the formation of 5-methyluridine at position 54 (m5U54) in all tRNAs, and that of position 341 (m5U341) in tmRNA (transfer-mRNA). This is tRNA/tmRNA (uracil-C(5))-methyltransferase from Pectobacterium carotovorum subsp. carotovorum (strain PC1).